The following is a 201-amino-acid chain: Peroxiredoxin prdx-2 (201 aa).

The Thioredoxin domain occupies 10-168; that stretch reads AFIGKPAPQF…TLRLVQAFQF (159 aa). The active-site Cysteine sulfenic acid (-SOH) intermediate is the Cys-55.

The protein belongs to the peroxiredoxin family. AhpC/Prx1 subfamily. Monomer and homodimer; disulfide-linked. Under nonstress conditions, present in the reduced monomeric form. Forms active hyperoxidized monomers and disulfide-linked homodimers upon oxidation by hydrogen peroxide. Forms active oxidized homodimers in response to the drug metformin. Post-translationally, the enzyme can be inactivated by further oxidation of the cysteine sulfenic acid (C(P)-SOH) to sulphinic acid (C(P)-SO2H) instead of its condensation to a disulfide bond. Expressed in the gonad, neurons and intestine (at protein level). Expressed in the pharyngeal inter-neuron I4 and the sensory interneuron I2. Expressed in the intestine, pharyngeal muscle 1, vulval muscle, body wall muscle, epithelial cells e1 and e3, and neurons in the head and tail.

The protein localises to the cytoplasm. It carries out the reaction a hydroperoxide + [thioredoxin]-dithiol = an alcohol + [thioredoxin]-disulfide + H2O. Activated following oxidation of the conserved redox-active cysteine residue, which subsequently allows for the oxidation and activation of substrates. Thiol-specific peroxidase that catalyzes the reduction of hydrogen peroxide and organic hydroperoxides to water and alcohols, respectively. In I2 pharyngeal neurons, required for the inhibition of feeding in response to light and hydrogen peroxide. In the intestine, plays a role in protecting cells against oxidative stress by detoxifying peroxides such as hydrogen peroxide. In addition, plays a role in the recovery from oxidative stress induced by hydrogen peroxide. In its hyperoxidized form (induced by hydrogen peroxide), confers protection against heat stress. However, has a low tendency for overoxidation during the normal lifespan. Increases sensitivity to cytotoxicity caused by metalloids and heavy metals such as arsenic and cadmium by playing a role in inhibiting the expression of phase II detoxification genes such as gcs-1 in intestinal cells. In addition, in response to arsenite, promotes the secretion of the insulin ligand daf-28 into the pseudocoelom, which negatively regulates the activities of daf-16 and skn-1. Plays a role in promoting longevity. Plays a role in the mitohormetic pathway by promoting the activation of pmk-1 in response to the drug metformin. The polypeptide is Peroxiredoxin prdx-2 (Caenorhabditis elegans).